Here is a 109-residue protein sequence, read N- to C-terminus: Arminin 6560 (109 aa).

The first 21 residues, 1–21, serve as a signal peptide directing secretion; it reads MKCLFGFLFIMLVAFLQDVHG. Positions 22-77 are excised as a propeptide; sequence VDSCIGKPCKVKGEDMKDIKEKKIEDIKEEIKNVKKEIFEDVDDELLDDNIRDDKI. Position 106 is an isoleucine amide (Ile106).

This sequence belongs to the arminin family. In terms of tissue distribution, expressed in the ectodermal epithelium.

The protein localises to the secreted. The protein resides in the target cell membrane. In terms of biological role, antimicrobial peptide with a broad-spectrum antimicrobial activity. Keeps its antibacterial activity under a wide range of salt concentrations that mimic physiological conditions of human blood, which is surprising, since Hydra is an obligate freshwater animal with nearly no salt tolerance. Does not affect red blood cells. The sequence is that of Arminin 6560 from Hydra vulgaris (Hydra).